The following is a 140-amino-acid chain: Nucleoside diphosphate kinase (140 aa).

Residues lysine 11, phenylalanine 59, arginine 87, threonine 93, arginine 104, and asparagine 114 each coordinate ATP. Catalysis depends on histidine 117, which acts as the Pros-phosphohistidine intermediate.

The protein belongs to the NDK family. In terms of assembly, homotetramer. It depends on Mg(2+) as a cofactor.

The protein resides in the cytoplasm. It catalyses the reaction a 2'-deoxyribonucleoside 5'-diphosphate + ATP = a 2'-deoxyribonucleoside 5'-triphosphate + ADP. The catalysed reaction is a ribonucleoside 5'-diphosphate + ATP = a ribonucleoside 5'-triphosphate + ADP. Its function is as follows. Major role in the synthesis of nucleoside triphosphates other than ATP. The ATP gamma phosphate is transferred to the NDP beta phosphate via a ping-pong mechanism, using a phosphorylated active-site intermediate. In Rickettsia bellii (strain OSU 85-389), this protein is Nucleoside diphosphate kinase.